We begin with the raw amino-acid sequence, 258 residues long: Indole-3-glycerol phosphate synthase (258 aa).

Belongs to the TrpC family.

It catalyses the reaction 1-(2-carboxyphenylamino)-1-deoxy-D-ribulose 5-phosphate + H(+) = (1S,2R)-1-C-(indol-3-yl)glycerol 3-phosphate + CO2 + H2O. Its pathway is amino-acid biosynthesis; L-tryptophan biosynthesis; L-tryptophan from chorismate: step 4/5. In Campylobacter jejuni subsp. jejuni serotype O:23/36 (strain 81-176), this protein is Indole-3-glycerol phosphate synthase.